Reading from the N-terminus, the 531-residue chain is Protein tweety homolog 2-like (531 aa).

The Extracellular segment spans residues 1 to 44 (MASSRQDYIAPWWTYWLHNFPHLNFNFQTVDNTFKPEDASYQQS). The chain crosses the membrane as a helical span at residues 45-65 (LVFLACVSAVALGLCLLLLSV). The Cytoplasmic segment spans residues 66-87 (YLTCLCCCRREEDEEVKRPDTC). Residues 88–108 (CVTWAAVITGLVICSAVGVGF) traverse the membrane as a helical segment. The Extracellular portion of the chain corresponds to 109–213 (YGNSETNDGV…RTAFIEYYRW (105 aa)). N129 is a glycosylation site (N-linked (GlcNAc...) asparagine). Residues 214–234 (LTYLLLLILDLVICLLACLAL) traverse the membrane as a helical segment. At 235-239 (AKQSR) the chain is on the cytoplasmic side. Residues 240 to 260 (WLLTVIMVCGMLTLIMSWASL) form a helical membrane-spanning segment. Residues 261 to 389 (GAGTATAVGT…GVCYDGVEGL (129 aa)) lie on the Extracellular side of the membrane. 2 N-linked (GlcNAc...) asparagine glycosylation sites follow: N283 and N352. Residues 390–410 (LYLCLFSLLAACAFCALLCAV) traverse the membrane as a helical segment. Topologically, residues 411 to 531 (PRAWMLIAIR…IRHFGTDFQV (121 aa)) are cytoplasmic.

The protein belongs to the tweety family.

Its subcellular location is the cell membrane. Its function is as follows. Probable large-conductance Ca(2+)-activated chloride channel. This Danio rerio (Zebrafish) protein is Protein tweety homolog 2-like (ttyh2l).